Reading from the N-terminus, the 183-residue chain is Dual-action ribosomal maturation protein DarP (183 aa).

The protein belongs to the DarP family.

The protein resides in the cytoplasm. Its function is as follows. Member of a network of 50S ribosomal subunit biogenesis factors which assembles along the 30S-50S interface, preventing incorrect 23S rRNA structures from forming. Promotes peptidyl transferase center (PTC) maturation. In Shigella flexneri, this protein is Dual-action ribosomal maturation protein DarP.